We begin with the raw amino-acid sequence, 130 residues long: Small ribosomal subunit protein uS9 (130 aa).

The disordered stretch occupies residues 109 to 130; the sequence is RMKERKKYGLKKARRAPQFSKR. Positions 111-130 are enriched in basic residues; sequence KERKKYGLKKARRAPQFSKR.

This sequence belongs to the universal ribosomal protein uS9 family.

The chain is Small ribosomal subunit protein uS9 from Clostridium kluyveri (strain NBRC 12016).